The following is a 169-amino-acid chain: Cysteine synthase B (169 aa).

Lys45 is subject to N6-(pyridoxal phosphate)lysine. Position 75 (Asn75) interacts with pyridoxal 5'-phosphate. The disordered stretch occupies residues 146–169 (ANGDNPEAHYTSTGPEIWRQTGGT).

It belongs to the cysteine synthase/cystathionine beta-synthase family. Pyridoxal 5'-phosphate is required as a cofactor.

It carries out the reaction O-acetyl-L-serine + hydrogen sulfide = L-cysteine + acetate. Its pathway is amino-acid biosynthesis; L-cysteine biosynthesis; L-cysteine from L-serine: step 2/2. This chain is Cysteine synthase B (cysM), found in Pseudomonas syringae pv. syringae.